Consider the following 245-residue polypeptide: Cysteine-rich secretory protein 3 (245 aa).

An N-terminal signal peptide occupies residues 1–22 (MALLPVLLFLAAVLLPFFPASG). The SCP domain occupies 42-171 (VNKHNDLRRT…TLKYYYVCQY (130 aa)). 5 disulfides stabilise this stretch: Cys191/Cys198, Cys194/Cys203, Cys207/Cys240, Cys216/Cys234, and Cys225/Cys238. Residues 207-240 (CEYEDLVSNCDSLKKIAGCEHELLKENCKTTCQC) form the ShKT domain.

The protein belongs to the CRISP family. Interacts with A1BG. In terms of tissue distribution, expressed in the salivary gland, in the ampulla and the seminal vesicle.

The protein resides in the secreted. The protein is Cysteine-rich secretory protein 3 (CRISP3) of Equus caballus (Horse).